The chain runs to 48 residues: Large ribosomal subunit protein bL33B (48 aa).

It belongs to the bacterial ribosomal protein bL33 family.

This is Large ribosomal subunit protein bL33B (rpmG 2) from Mycoplasmoides gallisepticum (strain R(low / passage 15 / clone 2)) (Mycoplasma gallisepticum).